The primary structure comprises 471 residues: Cysteine--tRNA ligase (471 aa).

A Zn(2+)-binding site is contributed by Cys30. Residues 32–42 (PTVYNFAHIGN) carry the 'HIGH' region motif. Cys212, His237, and Glu241 together coordinate Zn(2+). The short motif at 270 to 274 (KMSKS) is the 'KMSKS' region element. Lys273 is a binding site for ATP.

Belongs to the class-I aminoacyl-tRNA synthetase family. Monomer. Zn(2+) is required as a cofactor.

The protein localises to the cytoplasm. The enzyme catalyses tRNA(Cys) + L-cysteine + ATP = L-cysteinyl-tRNA(Cys) + AMP + diphosphate. The sequence is that of Cysteine--tRNA ligase from Leptospira interrogans serogroup Icterohaemorrhagiae serovar copenhageni (strain Fiocruz L1-130).